A 305-amino-acid chain; its full sequence is Glutaminase (305 aa).

Residues S61, N113, E158, N165, Y189, Y241, and V259 each coordinate substrate.

This sequence belongs to the glutaminase family. Homotetramer.

It carries out the reaction L-glutamine + H2O = L-glutamate + NH4(+). In Clostridium botulinum (strain Loch Maree / Type A3), this protein is Glutaminase.